The following is a 305-amino-acid chain: Protoheme IX farnesyltransferase (305 aa).

A run of 9 helical transmembrane segments spans residues 31 to 51, 53 to 73, 98 to 118, 124 to 144, 153 to 173, 181 to 201, 221 to 241, 242 to 262, and 285 to 305; these read IQVLLLITTAGAMWIAGKGHV, PLLLLVTLLGGTLAASSANAF, ILPWQAALFATALGVASFAVL, LFAALLAISGIGFYVVIYTLW, IVIGGAAGAIPPLVGWAAVTG, VLFGIIFMWTPPHFWALAMMI, ATARQIFIYTLVLVPVTLVLY, PLGTMGWIYLLAAGALGLWLI, and SIFYLMLLFVAMGIDSIFLFA.

Belongs to the UbiA prenyltransferase family. Protoheme IX farnesyltransferase subfamily.

Its subcellular location is the cell inner membrane. It catalyses the reaction heme b + (2E,6E)-farnesyl diphosphate + H2O = Fe(II)-heme o + diphosphate. It participates in porphyrin-containing compound metabolism; heme O biosynthesis; heme O from protoheme: step 1/1. Its function is as follows. Converts heme B (protoheme IX) to heme O by substitution of the vinyl group on carbon 2 of heme B porphyrin ring with a hydroxyethyl farnesyl side group. In Gloeobacter violaceus (strain ATCC 29082 / PCC 7421), this protein is Protoheme IX farnesyltransferase.